The sequence spans 73 residues: Eukaryotic translation initiation factor 4 gamma 2 (73 aa).

One can recognise a W2 domain in the interval 1 to 70 (QVHCYNSNFP…ETAEEEESEE (70 aa)).

The protein belongs to the eukaryotic initiation factor 4G family. Interacts with the serine/threonine protein kinases MKNK1 and MKNK2. Binds EIF4A and EIF3. Phosphorylation; hyperphosphorylated during mitosis.

Its function is as follows. Appears to play a role in the switch from cap-dependent to IRES-mediated translation during mitosis, apoptosis and viral infection. Cleaved by some caspases and viral proteases. In Gallus gallus (Chicken), this protein is Eukaryotic translation initiation factor 4 gamma 2 (EIF4G2).